Reading from the N-terminus, the 97-residue chain is Small ribosomal subunit protein bS20 (97 aa).

Positions methionine 1 to lysine 22 are disordered.

The protein belongs to the bacterial ribosomal protein bS20 family.

Functionally, binds directly to 16S ribosomal RNA. The protein is Small ribosomal subunit protein bS20 of Crocosphaera subtropica (strain ATCC 51142 / BH68) (Cyanothece sp. (strain ATCC 51142)).